Consider the following 645-residue polypeptide: Cysteine-rich receptor-like protein kinase 19 (645 aa).

A signal peptide spans 1–20 (MSSLISFIFLFLFSSITASA). Residues 21-262 (QNTFYLYHNC…PRPGKGGNSS (242 aa)) lie on the Extracellular side of the membrane. 2 consecutive Gnk2-homologous domains span residues 24–129 (FYLY…NRNI) and 135–239 (TDGG…NYAF). Asparagine 29, asparagine 39, asparagine 57, asparagine 101, asparagine 185, asparagine 241, and asparagine 260 each carry an N-linked (GlcNAc...) asparagine glycan. A helical membrane pass occupies residues 263-283 (VIIIAVVVPITVLFLLLVAVF). At 284–645 (SVRAKNKRTL…EASITRVTPR (362 aa)) the chain is on the cytoplasmic side. In terms of domain architecture, Protein kinase spans 326–603 (FLPINKLGQG…IVQMLTTSLI (278 aa)). ATP-binding positions include 332–340 (LGQGGFGEV) and lysine 354. The residue at position 399 (tyrosine 399) is a Phosphotyrosine. Aspartate 451 functions as the Proton acceptor in the catalytic mechanism. Position 491 is a phosphothreonine (threonine 491). Residue tyrosine 499 is modified to Phosphotyrosine. Residues 616-645 (RSKQEQAGPSIDSSTHCSVDEASITRVTPR) form a disordered region. The span at 620–632 (EQAGPSIDSSTHC) shows a compositional bias: polar residues.

Belongs to the protein kinase superfamily. Ser/Thr protein kinase family. CRK subfamily. Interacts with MWL1.

It localises to the membrane. It catalyses the reaction L-seryl-[protein] + ATP = O-phospho-L-seryl-[protein] + ADP + H(+). The catalysed reaction is L-threonyl-[protein] + ATP = O-phospho-L-threonyl-[protein] + ADP + H(+). The sequence is that of Cysteine-rich receptor-like protein kinase 19 (CRK19) from Arabidopsis thaliana (Mouse-ear cress).